The chain runs to 282 residues: MMETAADALASGTVPLEMTQTQIFEAIQGDTLLASSLWINIALAGLSILLFVYMGRNLEDPRAQLIFVATLMVPLVSISSYTGLVSGLTVSFLEMPAGHALAGQEVLTPWGRYLTWALSTPMILVALGLLAGSNATKLFTAVTADIGMCVTGLAAALTTSSYLLRWVWYVISCAFFVVVLYVLLAEWAEDAEVAGTAEIFNTLKLLTVVLWLGYPIFWALGAEGLAVLDVAVTSWAYSGMDIVAKYLFAFLLLRWVVDNERTVAGMAAGLGAPLARCAPADD.

Topologically, residues 1–29 (MMETAADALASGTVPLEMTQTQIFEAIQG) are extracellular. Residues 30 to 55 (DTLLASSLWINIALAGLSILLFVYMG) form a helical membrane-spanning segment. The Cytoplasmic portion of the chain corresponds to 56 to 61 (RNLEDP). A helical membrane pass occupies residues 62–85 (RAQLIFVATLMVPLVSISSYTGLV). The Extracellular segment spans residues 86-109 (SGLTVSFLEMPAGHALAGQEVLTP). The helical transmembrane segment at 110 to 131 (WGRYLTWALSTPMILVALGLLA) threads the bilayer. The Cytoplasmic portion of the chain corresponds to 132–134 (GSN). Residues 135 to 158 (ATKLFTAVTADIGMCVTGLAAALT) traverse the membrane as a helical segment. Over 159–161 (TSS) the chain is Extracellular. A helical transmembrane segment spans residues 162–184 (YLLRWVWYVISCAFFVVVLYVLL). At 185-196 (AEWAEDAEVAGT) the chain is on the cytoplasmic side. Residues 197–220 (AEIFNTLKLLTVVLWLGYPIFWAL) form a helical membrane-spanning segment. Residues 221–229 (GAEGLAVLD) are Extracellular-facing. Residues 230–258 (VAVTSWAYSGMDIVAKYLFAFLLLRWVVD) traverse the membrane as a helical segment. K245 bears the N6-(retinylidene)lysine mark. The Cytoplasmic portion of the chain corresponds to 259 to 282 (NERTVAGMAAGLGAPLARCAPADD).

Belongs to the archaeal/bacterial/fungal opsin family.

The protein localises to the cell membrane. Functionally, light-driven chloride pump. The sequence is that of Halorhodopsin (hop) from Halorubrum sodomense.